A 328-amino-acid chain; its full sequence is MSHLALQPGFDFQQAGKEVLEIEREGLAELDQYINQHFTLACEKMFNCTGKVVVMGMGKSGHIGRKMAATFASTGTSSFFVHPGEAAHGDLGMVTPQDVVIAISNSGESSEIAALIPVLKRLHVPLICITGRPESSMARAADVHLCVKVPKEACPLGLAPTSSTTATLVMGDALAVALLKARGFTAEDFALSHPGGALGRKLLLRVSDIMHTGDEIPHVNKHATLRDALLEITRKNLGMTVICDESMKIDGIFTDGDLRRMFDMGGDMRQLGIAEVMTPGGIRVRPGILAVDALNLMQSRHITSVLVADGDQLLGVLHMHDLLRAGVV.

The SIS domain occupies 41–184 (ACEKMFNCTG…AVALLKARGF (144 aa)). Substrate contacts are provided by residues 75-76 (GT), histidine 82, histidine 88, 114-123 (ALIPVLKRLH), and 148-150 (KVP). Histidine 82 contacts Zn(2+). The CBS 1 domain maps to 210-268 (MHTGDEIPHVNKHATLRDALLEITRKNLGMTVICDESMKIDGIFTDGDLRRMFDMGGDM). Glutamate 275 contacts substrate. The 52-residue stretch at 277-328 (MTPGGIRVRPGILAVDALNLMQSRHITSVLVADGDQLLGVLHMHDLLRAGVV) folds into the CBS 2 domain.

Belongs to the SIS family. GutQ/KpsF subfamily. Homotetramer.

It catalyses the reaction D-arabinose 5-phosphate = D-ribulose 5-phosphate. It functions in the pathway carbohydrate biosynthesis; 3-deoxy-D-manno-octulosonate biosynthesis; 3-deoxy-D-manno-octulosonate from D-ribulose 5-phosphate: step 1/3. Its pathway is bacterial outer membrane biogenesis; lipopolysaccharide biosynthesis. In terms of biological role, involved in the biosynthesis of 3-deoxy-D-manno-octulosonate (KDO), a unique 8-carbon sugar component of lipopolysaccharides (LPSs). Catalyzes the reversible aldol-ketol isomerization between D-ribulose 5-phosphate (Ru5P) and D-arabinose 5-phosphate (A5P). The protein is Arabinose 5-phosphate isomerase KdsD (kdsD) of Salmonella typhi.